A 464-amino-acid polypeptide reads, in one-letter code: Chromosomal replication initiator protein DnaA (464 aa).

Residues 1–74 form a domain I, interacts with DnaA modulators region; it reads MDAVGYEVFW…ERKFLELSGH (74 aa). The tract at residues 74–117 is domain II; that stretch reads HPIKLLFAVKKGTPHGNTAPPKHVHTYLEKNSPAEVPSKKSFHP. Residues 118-341 form a domain III, AAA+ region region; it reads DLNRDYTFEN…GALTKIIAFI (224 aa). ATP is bound by residues glycine 162, glycine 164, lysine 165, and threonine 166. Positions 342-464 are domain IV, binds dsDNA; the sequence is EVSGSITIDI…LKSKVQDSIR (123 aa).

It belongs to the DnaA family. Oligomerizes as a right-handed, spiral filament on DNA at oriC.

The protein localises to the cytoplasm. Plays an essential role in the initiation and regulation of chromosomal replication. ATP-DnaA binds to the origin of replication (oriC) to initiate formation of the DNA replication initiation complex once per cell cycle. Binds the DnaA box (a 9 base pair repeat at the origin) and separates the double-stranded (ds)DNA. Forms a right-handed helical filament on oriC DNA; dsDNA binds to the exterior of the filament while single-stranded (ss)DNA is stabiized in the filament's interior. The ATP-DnaA-oriC complex binds and stabilizes one strand of the AT-rich DNA unwinding element (DUE), permitting loading of DNA polymerase. After initiation quickly degrades to an ADP-DnaA complex that is not apt for DNA replication. Binds acidic phospholipids. The chain is Chromosomal replication initiator protein DnaA from Treponema pallidum (strain Nichols).